The following is a 540-amino-acid chain: ADP,ATP carrier protein 2 (540 aa).

A run of 11 helical transmembrane segments spans residues 24–44 (FSKFVPLFLLAFFVGFNYCLL), 62–82 (VIPFLKVWGIVPGAVIVTMVY), 94–114 (VFYCFMAAFLGFFFLFAVIIY), 151–171 (IYYVMSELWSSVVLSMLFWGL), 223–243 (SVMLNLTMLITCSGLIMIWLY), 295–315 (LLGLAIIVLSYNLVIHLFEVV), 337–357 (ITTLIGVVSVLAAVLLTGQCI), 367–387 (LVTPLVMLVSGLLFFGTIFAA), 391–411 (ISIFGGVLGMTPLALAAWTGG), 458–478 (SGGSLIYQGLLVIFSSVAASL), and 480–500 (VIALVLLIIMVVWIAVVAYIG).

It belongs to the ADP/ATP translocase tlc family.

It is found in the cell membrane. This Chlamydia pneumoniae (Chlamydophila pneumoniae) protein is ADP,ATP carrier protein 2 (tlcB).